The primary structure comprises 315 residues: MSTLTIATRESRLALWQAEYVQDLLTRRGHQVGLLGMTTLGDQILDRALSKVGGKGLFVKELEVALEDGRADLAVHSLKDVPMELPDGFALACVMEREDPRDAFVSNQYANLASLPQGAVVGTSSLRRMALLRALRPDLKIEPLRGNLDTRLRKLDDGMYAAIVLAAAGLKRLGLSQRIRATFEPTDMLPAAGQGALGIEVRSQRQDVIDALAPLAHHTTWLAVSAERAVSRAMGGSCSMPLAAYATLAADILTIDAAWGDPDGKLALVHVRASAAVSDLASATALGARVAADLRAAVLANGGTLLVADAPQGQA.

Cys-238 bears the S-(dipyrrolylmethanemethyl)cysteine mark.

Belongs to the HMBS family. In terms of assembly, monomer. The cofactor is dipyrromethane.

It catalyses the reaction 4 porphobilinogen + H2O = hydroxymethylbilane + 4 NH4(+). It participates in porphyrin-containing compound metabolism; protoporphyrin-IX biosynthesis; coproporphyrinogen-III from 5-aminolevulinate: step 2/4. Tetrapolymerization of the monopyrrole PBG into the hydroxymethylbilane pre-uroporphyrinogen in several discrete steps. The polypeptide is Porphobilinogen deaminase (Albidiferax ferrireducens (strain ATCC BAA-621 / DSM 15236 / T118) (Rhodoferax ferrireducens)).